A 199-amino-acid chain; its full sequence is Photosystem I reaction center subunit XI (199 aa).

Helical transmembrane passes span 108–128 (LTAG…LFVL) and 165–185 (FWLG…TLHL).

Belongs to the PsaL family.

Its subcellular location is the cellular thylakoid membrane. In Prochlorococcus marinus (strain MIT 9301), this protein is Photosystem I reaction center subunit XI.